An 86-amino-acid polypeptide reads, in one-letter code: Acyl carrier protein (86 aa).

The Carrier domain maps to 7–85 (SKVDNIEQKV…DVVNYIKEHK (79 aa)). O-(pantetheine 4'-phosphoryl)serine is present on S45.

This sequence belongs to the acyl carrier protein (ACP) family. Post-translationally, 4'-phosphopantetheine is transferred from CoA to a specific serine of apo-ACP by AcpS. This modification is essential for activity because fatty acids are bound in thioester linkage to the sulfhydryl of the prosthetic group.

The protein resides in the cytoplasm. Its pathway is lipid metabolism; fatty acid biosynthesis. Its function is as follows. Carrier of the growing fatty acid chain in fatty acid biosynthesis. The sequence is that of Acyl carrier protein from Rickettsia bellii (strain RML369-C).